A 37-amino-acid chain; its full sequence is Mu-cyrtautoxin-As1a (37 aa).

4 disulfides stabilise this stretch: Cys-1–Cys-15, Cys-8–Cys-19, Cys-14–Cys-35, and Cys-26–Cys-31.

Belongs to the neurotoxin 13 (insecticidal toxin ABC) family. 01 (Aps III) subfamily. As to expression, expressed by the venom gland.

The protein resides in the secreted. Functionally, the recombinant mu-cyrtautoxin-As1a potently and voltage-independently blocks voltage-gated sodium channels (Nav) of insects. It acts by pluging the outer vestibule of the channel. It acts in combination with a weak (30%) voltage-independent block of insect voltage-gated calcium (Cav) channels (low-voltage and high-voltage channels). Tested on DUM neurons, it inhibits sodium currents with an IC(50) of 540 nM (and a Hill coefficient &gt;1, reflecting an incomplete block at higher concentrations). In vivo, it induces flaccid paralysis in adult Australian sheep blowfly Lucilia cuprina. It is both paralytic and lethal, when injected into lepidopteran larvae. It is a slower acting toxin, being lethal at 24 hours, but not paralytic at 1 hour post-injection. The polypeptide is Mu-cyrtautoxin-As1a (Apomastus schlingeri (Trap-door spider)).